Consider the following 207-residue polypeptide: Keratin-associated protein 27-1 (207 aa).

The tract at residues 184–207 is disordered; that stretch reads QLLESSPGVEPTCCVTGGSQLPSK.

It belongs to the PMG family. In terms of assembly, interacts with hair keratins.

In the hair cortex, hair keratin intermediate filaments are embedded in an interfilamentous matrix, consisting of hair keratin-associated proteins (KRTAP), which are essential for the formation of a rigid and resistant hair shaft through their extensive disulfide bond cross-linking with abundant cysteine residues of hair keratins. The matrix proteins include the high-sulfur and high-glycine-tyrosine keratins. The protein is Keratin-associated protein 27-1 (KRTAP27-1) of Homo sapiens (Human).